A 442-amino-acid polypeptide reads, in one-letter code: Probable 6-phospho-beta-glucosidase (442 aa).

Residue 5–73 (LKIVTIGGGS…VPIDIHLTLD (69 aa)) coordinates NAD(+). 2 residues coordinate substrate: R96 and N150. Mn(2+) is bound by residues C172 and H202. Catalysis depends on Y256, which acts as the Proton acceptor.

Belongs to the glycosyl hydrolase 4 family. The cofactor is NAD(+). Requires a divalent metal cation as cofactor.

The enzyme catalyses 6-phospho-beta-D-glucosyl-(1-&gt;4)-D-glucose + H2O = D-glucose 6-phosphate + D-glucose. Its function is as follows. Hydrolyzes phospho-beta-glucosides. This chain is Probable 6-phospho-beta-glucosidase (licH), found in Bacillus subtilis (strain 168).